The following is a 141-amino-acid chain: Large ribosomal subunit protein uL11 (141 aa).

The protein belongs to the universal ribosomal protein uL11 family. As to quaternary structure, part of the ribosomal stalk of the 50S ribosomal subunit. Interacts with L10 and the large rRNA to form the base of the stalk. L10 forms an elongated spine to which L12 dimers bind in a sequential fashion forming a multimeric L10(L12)X complex. One or more lysine residues are methylated.

Its function is as follows. Forms part of the ribosomal stalk which helps the ribosome interact with GTP-bound translation factors. This is Large ribosomal subunit protein uL11 from Prochlorococcus marinus (strain MIT 9312).